Here is a 273-residue protein sequence, read N- to C-terminus: 4-hydroxy-tetrahydrodipicolinate reductase (273 aa).

Residues 12–17 (GAGGRM) and E38 contribute to the NAD(+) site. R39 serves as a coordination point for NADP(+). Residues 102–104 (GTT) and 126–129 (AANF) contribute to the NAD(+) site. The active-site Proton donor/acceptor is H159. (S)-2,3,4,5-tetrahydrodipicolinate is bound at residue H160. K163 functions as the Proton donor in the catalytic mechanism. Residue 169–170 (GT) coordinates (S)-2,3,4,5-tetrahydrodipicolinate.

Belongs to the DapB family. Homotetramer.

It is found in the cytoplasm. It catalyses the reaction (S)-2,3,4,5-tetrahydrodipicolinate + NAD(+) + H2O = (2S,4S)-4-hydroxy-2,3,4,5-tetrahydrodipicolinate + NADH + H(+). The enzyme catalyses (S)-2,3,4,5-tetrahydrodipicolinate + NADP(+) + H2O = (2S,4S)-4-hydroxy-2,3,4,5-tetrahydrodipicolinate + NADPH + H(+). It functions in the pathway amino-acid biosynthesis; L-lysine biosynthesis via DAP pathway; (S)-tetrahydrodipicolinate from L-aspartate: step 4/4. Catalyzes the conversion of 4-hydroxy-tetrahydrodipicolinate (HTPA) to tetrahydrodipicolinate. This chain is 4-hydroxy-tetrahydrodipicolinate reductase, found in Pectobacterium atrosepticum (strain SCRI 1043 / ATCC BAA-672) (Erwinia carotovora subsp. atroseptica).